A 122-amino-acid polypeptide reads, in one-letter code: Small ribosomal subunit protein uS13 (122 aa).

Residues 95–122 (GLPVHGQRTHTNARTRKGPRRGAVGKKK) are disordered.

Belongs to the universal ribosomal protein uS13 family. In terms of assembly, part of the 30S ribosomal subunit. Forms a loose heterodimer with protein S19. Forms two bridges to the 50S subunit in the 70S ribosome.

Functionally, located at the top of the head of the 30S subunit, it contacts several helices of the 16S rRNA. In the 70S ribosome it contacts the 23S rRNA (bridge B1a) and protein L5 of the 50S subunit (bridge B1b), connecting the 2 subunits; these bridges are implicated in subunit movement. Contacts the tRNAs in the A and P-sites. The polypeptide is Small ribosomal subunit protein uS13 (Nitratidesulfovibrio vulgaris (strain DSM 19637 / Miyazaki F) (Desulfovibrio vulgaris)).